The sequence spans 396 residues: Ornithine aminotransferase (396 aa).

At Lys-255 the chain carries N6-(pyridoxal phosphate)lysine.

This sequence belongs to the class-III pyridoxal-phosphate-dependent aminotransferase family. OAT subfamily. Requires pyridoxal 5'-phosphate as cofactor.

The protein localises to the cytoplasm. It carries out the reaction a 2-oxocarboxylate + L-ornithine = L-glutamate 5-semialdehyde + an L-alpha-amino acid. Its pathway is amino-acid biosynthesis; L-proline biosynthesis; L-glutamate 5-semialdehyde from L-ornithine: step 1/1. Functionally, catalyzes the interconversion of ornithine to glutamate semialdehyde. The protein is Ornithine aminotransferase of Bacillus anthracis (strain A0248).